Here is a 70-residue protein sequence, read N- to C-terminus: Protein SlyX homolog (70 aa).

It belongs to the SlyX family.

The sequence is that of Protein SlyX homolog from Shewanella piezotolerans (strain WP3 / JCM 13877).